Consider the following 734-residue polypeptide: Elongation factor G, mitochondrial (734 aa).

Residues 1–32 constitute a mitochondrion transit peptide; sequence MTSFLTSRFGGLALRNVMNNKNGINSFGLRCF. Residues 38 to 318 form the tr-type G domain; it reads SGLRNIGISA…GVIKYLPSPN (281 aa). Residues 47–54, 114–118, and 168–171 each bind GTP; these read AHIDSGKT, DTPGH, and NKLD.

The protein belongs to the TRAFAC class translation factor GTPase superfamily. Classic translation factor GTPase family. EF-G/EF-2 subfamily.

Its subcellular location is the mitochondrion. It catalyses the reaction GTP + H2O = GDP + phosphate + H(+). It functions in the pathway protein biosynthesis; polypeptide chain elongation. Mitochondrial GTPase that catalyzes the GTP-dependent ribosomal translocation step during translation elongation. During this step, the ribosome changes from the pre-translocational (PRE) to the post-translocational (POST) state as the newly formed A-site-bound peptidyl-tRNA and P-site-bound deacylated tRNA move to the P and E sites, respectively. Catalyzes the coordinated movement of the two tRNA molecules, the mRNA and conformational changes in the ribosome. This is Elongation factor G, mitochondrial (gfm1) from Dictyostelium discoideum (Social amoeba).